The sequence spans 529 residues: MASFHKGAAGDSMGSSKMSFDQRRQLVLKLSKESEREFKEVLKDWSCNEIRELLRAESKKDIKYTGLTKDEIITRLFNIVSKKNTRDHEVEEIIPSPKRQKRDLVTPLAKAKGKGKMYCQNLACQNKLREEATFCKRCSCCICFKYDDNKDPSLWLTCNSDSQFDGESCGLSCHLNCAFDSEKSGLKEDTPSSDIDGCFNCVSCGKTNSKIECLKKQLIIANEERRVGVFCYRILLAHKLLKGTKKYIIVSEEVEKAVMHLKNEFGVPISCLPSKMSRGLVNRLCCAEKVKKHCSSALKELDGLPLPSTIQGSMKIRIESVLATSVTFDIEAEESFSWGDTNHYRMVYRKVSEKHSSKDLTRELFSTSSHQRFTVMELTPATEYWFKIVSFSGVEELSVDEFIVSTKTLQDEEVAAVLLNMSNCNNANKMEKSGSCSFGFEECVNLIRQLECSGQVKSDFRKKFLTWYCLKATDKEKHVVEIFVDTFKDDKEALAKQLIDTFSDCITRKHPEIGGGSESAGVSLILLQD.

Residues 97-104 (PKRQKRDL) carry the Nuclear localization signal motif. The PHD-type zinc-finger motif lies at 137 to 207 (RCSCCICFKY…CFNCVSCGKT (71 aa)). A Nuclear localization signal motif is present at residues 214–221 (LKKQLIIA). The region spanning 312–411 (GSMKIRIESV…FIVSTKTLQD (100 aa)) is the Fibronectin type-III domain. Residues 421–529 (MSNCNNANKM…AGVSLILLQD (109 aa)) form a VIN3-Interacting Domain (VID) region.

As to quaternary structure, interacts with VIN3.

The protein localises to the nucleus. Its function is as follows. Involved in both the vernalization and photoperiod pathways by regulating gene expression. This is VIN3-like protein 3 (VIL3) from Arabidopsis thaliana (Mouse-ear cress).